A 396-amino-acid polypeptide reads, in one-letter code: Elongation factor Tu (396 aa).

The region spanning 10-206 (KPHVNVGTIG…ALDDYIPEPE (197 aa)) is the tr-type G domain. The segment at 19–26 (GHVDHGKT) is G1. A GTP-binding site is contributed by 19–26 (GHVDHGKT). T26 lines the Mg(2+) pocket. Residues 60–64 (GITIA) are G2. Positions 81 to 84 (DCPG) are G3. Residues 81–85 (DCPGH) and 136–139 (NKAD) contribute to the GTP site. The G4 stretch occupies residues 136 to 139 (NKAD). The interval 174-176 (SAL) is G5.

This sequence belongs to the TRAFAC class translation factor GTPase superfamily. Classic translation factor GTPase family. EF-Tu/EF-1A subfamily. Monomer.

It is found in the cytoplasm. It carries out the reaction GTP + H2O = GDP + phosphate + H(+). Functionally, GTP hydrolase that promotes the GTP-dependent binding of aminoacyl-tRNA to the A-site of ribosomes during protein biosynthesis. The chain is Elongation factor Tu from Methylococcus capsulatus (strain ATCC 33009 / NCIMB 11132 / Bath).